A 362-amino-acid chain; its full sequence is 4-hydroxy-3-methylbut-2-en-1-yl diphosphate synthase (flavodoxin) (362 aa).

Cys266, Cys269, Cys301, and Glu308 together coordinate [4Fe-4S] cluster.

Belongs to the IspG family. [4Fe-4S] cluster serves as cofactor.

The enzyme catalyses (2E)-4-hydroxy-3-methylbut-2-enyl diphosphate + oxidized [flavodoxin] + H2O + 2 H(+) = 2-C-methyl-D-erythritol 2,4-cyclic diphosphate + reduced [flavodoxin]. It functions in the pathway isoprenoid biosynthesis; isopentenyl diphosphate biosynthesis via DXP pathway; isopentenyl diphosphate from 1-deoxy-D-xylulose 5-phosphate: step 5/6. Converts 2C-methyl-D-erythritol 2,4-cyclodiphosphate (ME-2,4cPP) into 1-hydroxy-2-methyl-2-(E)-butenyl 4-diphosphate. This chain is 4-hydroxy-3-methylbut-2-en-1-yl diphosphate synthase (flavodoxin), found in Malacoplasma penetrans (strain HF-2) (Mycoplasma penetrans).